The sequence spans 349 residues: N-acetyltaurine hydrolase (349 aa).

Residues H26, H28, E169, H201, H230, and D298 each contribute to the a divalent metal cation site.

This sequence belongs to the metallo-dependent hydrolases superfamily. Phosphotriesterase family. A divalent metal cation serves as cofactor.

It is found in the cytoplasm. The protein resides in the cytosol. It catalyses the reaction N-acetyltaurine + H2O = taurine + acetate. The enzyme catalyses N-propanoyltaurine + H2O = propanoate + taurine. The catalysed reaction is N-acetyl-L-methionine + H2O = L-methionine + acetate. It carries out the reaction N-acetyl-L-isoleucine + H2O = L-isoleucine + acetate. It catalyses the reaction N-acetyl-L-leucine + H2O = L-leucine + acetate. The enzyme catalyses N-acetyl-L-valine + H2O = L-valine + acetate. N-acetyltaurine hydrolase that regulates feeding by catalyzing the hydrolysis of N-acetyltaurine into taurine and acetate. N-acetyltaurine has anorexigenic and anti-obesity effects that are dependent on GFRAL receptor and GDF15. PTER also acts on other N-acetyl amino acids (Met, Ile, Leu, Val) and N-propionyltaurine, but at lower rates. The protein is N-acetyltaurine hydrolase of Homo sapiens (Human).